A 421-amino-acid polypeptide reads, in one-letter code: Gamma-glutamyl phosphate reductase (421 aa).

The protein belongs to the gamma-glutamyl phosphate reductase family.

Its subcellular location is the cytoplasm. The enzyme catalyses L-glutamate 5-semialdehyde + phosphate + NADP(+) = L-glutamyl 5-phosphate + NADPH + H(+). It functions in the pathway amino-acid biosynthesis; L-proline biosynthesis; L-glutamate 5-semialdehyde from L-glutamate: step 2/2. In terms of biological role, catalyzes the NADPH-dependent reduction of L-glutamate 5-phosphate into L-glutamate 5-semialdehyde and phosphate. The product spontaneously undergoes cyclization to form 1-pyrroline-5-carboxylate. This chain is Gamma-glutamyl phosphate reductase, found in Pseudomonas fluorescens (strain SBW25).